Consider the following 279-residue polypeptide: Four and a half LIM domains protein 2 (279 aa).

The segment at 7–31 adopts a C4-type zinc-finger fold; sequence CHHCNESLFGKKYILREESPYCVVC. 3 LIM zinc-binding domains span residues 40–92, 101–153, and 162–212; these read CEEC…CTDC, CQEC…CVPC, and CVQC…CLNC. K78 participates in a covalent cross-link: Glycyl lysine isopeptide (Lys-Gly) (interchain with G-Cter in SUMO2). Residues K167 and K220 each participate in a glycyl lysine isopeptide (Lys-Gly) (interchain with G-Cter in SUMO2) cross-link. One can recognise an LIM zinc-binding 4 domain in the interval 221–275; sequence CAGCTNPISGLGGTKYISFEERQWHNDCFNCKKCSLSLVGRGFLTERDDILCPDC. S238 is subject to Phosphoserine.

Interacts with ZNF638 and TTN/titin. Interacts with E4F1. Interacts with GRB7. Interacts with SIRT1 and FOXO1. Interacts with CEFIP. Interacts with calcineurin. Interacts with FOXK1. As to expression, expressed in skeletal muscle and heart.

It localises to the cytoplasm. It is found in the nucleus. Its subcellular location is the myofibril. The protein resides in the sarcomere. The protein localises to the z line. Its function is as follows. May function as a molecular transmitter linking various signaling pathways to transcriptional regulation. Negatively regulates the transcriptional repressor E4F1 and may function in cell growth. Inhibits the transcriptional activity of FOXO1 and its apoptotic function by enhancing the interaction of FOXO1 with SIRT1 and FOXO1 deacetylation. Negatively regulates the calcineurin/NFAT signaling pathway in cardiomyocytes. The chain is Four and a half LIM domains protein 2 (FHL2) from Homo sapiens (Human).